A 346-amino-acid polypeptide reads, in one-letter code: MISALLGRSKSELEEWAVAQGQPAFRGRQLHDWLYAKGVRDLQGITVLPKAWRASLQNEGVSVGRLHEQERRVSADATTKLLLGTEDGETLETVGIPTDQRLTVCVSSQVGCPMACRFCATGKGGLQRSLAGHEIVAQVLSIREVMERRPSHVVFMGMGEPLLNIEAVLESIRCLNDDLGIGQRRITVSTVGVPHTLPRLADLALKQLGRAQFTLAVSLHAPNQALREELIPTAKTYPYDALLDDCRYYLNKTGRRVSFEYILLGGVNDHPHHASELADRVGGFQSHVNLIAYNPIEEEEFQRPTTQRIEGFRRVLERRGVAVSLRASRGLDQDAACGQLRRNRRS.

Glutamate 92 (proton acceptor) is an active-site residue. The Radical SAM core domain occupies 98–332 (TDQRLTVCVS…VSLRASRGLD (235 aa)). Cysteine 105 and cysteine 337 are oxidised to a cystine. Positions 112, 116, and 119 each coordinate [4Fe-4S] cluster. S-adenosyl-L-methionine contacts are provided by residues 159-160 (GE), serine 189, 218-220 (SLH), and asparagine 294. The S-methylcysteine intermediate role is filled by cysteine 337.

Belongs to the radical SAM superfamily. RlmN family. It depends on [4Fe-4S] cluster as a cofactor.

It localises to the cytoplasm. It carries out the reaction adenosine(2503) in 23S rRNA + 2 reduced [2Fe-2S]-[ferredoxin] + 2 S-adenosyl-L-methionine = 2-methyladenosine(2503) in 23S rRNA + 5'-deoxyadenosine + L-methionine + 2 oxidized [2Fe-2S]-[ferredoxin] + S-adenosyl-L-homocysteine. It catalyses the reaction adenosine(37) in tRNA + 2 reduced [2Fe-2S]-[ferredoxin] + 2 S-adenosyl-L-methionine = 2-methyladenosine(37) in tRNA + 5'-deoxyadenosine + L-methionine + 2 oxidized [2Fe-2S]-[ferredoxin] + S-adenosyl-L-homocysteine. In terms of biological role, specifically methylates position 2 of adenine 2503 in 23S rRNA and position 2 of adenine 37 in tRNAs. This Synechococcus sp. (strain CC9311) protein is Probable dual-specificity RNA methyltransferase RlmN.